The sequence spans 521 residues: Tetratricopeptide repeat and J domain-containing co-chaperone DNJ1 (521 aa).

The N-terminal stretch at 1–21 (MHLNLAGLAVAATAFLATASA) is a signal peptide. TPR repeat units lie at residues 33 to 66 (VSNL…DPTN), 67 to 100 (YLSL…KPGF), 102 to 134 (GAHL…PKSA), 176 to 209 (PHLR…KPGD), 211 to 244 (SPHI…DPDS), 315 to 348 (LENL…NPDS), and 349 to 382 (FWGL…RPDQ). One can recognise a J domain in the interval 404–473 (DYYKVLGVEN…ELRARFDRGD (70 aa)). A compositionally biased stretch (basic and acidic residues) spans 464 to 474 (ELRARFDRGDD). Residues 464–521 (ELRARFDRGDDPNSQERPNPFQGQGNPFGGGHPFMFQQGGGGGGPNIKFQFGGQPFGF) form a disordered region. Gly residues predominate over residues 489–508 (NPFGGGHPFMFQQGGGGGGP). The segment covering 509 to 521 (NIKFQFGGQPFGF) has biased composition (low complexity).

The protein localises to the endoplasmic reticulum lumen. Its function is as follows. Endoplasmic reticulum co-chaperone required for the of virulence factors such as PG1, the major endopolygalacturonase produced during the infection of tomato plants. This Fusarium oxysporum f. sp. lycopersici (strain 4287 / CBS 123668 / FGSC 9935 / NRRL 34936) (Fusarium vascular wilt of tomato) protein is Tetratricopeptide repeat and J domain-containing co-chaperone DNJ1.